Reading from the N-terminus, the 133-residue chain is MPSLCIIALFGTLTFYTLIPSIHTLKCVICDSPMGNYDCKTTYPAATECPGSSNNYCYKRETFASNGNLDQIRRNCNPVAASSKACKDLENGAKICEYSCNTDGCNSVAGMEPTRAVYFIAILMLTFYTFIRL.

Residues 1–24 (MPSLCIIALFGTLTFYTLIPSIHT) form the signal peptide.

Belongs to the scoloptoxin-05 family. In terms of processing, contains 5 disulfide bonds. As to expression, expressed by the venom gland.

The protein resides in the secreted. In Scolopendra alternans (Florida Keys giant centipede), this protein is U-scoloptoxin(05)-Sa1a.